The primary structure comprises 117 residues: Larval cuticle protein A2B (117 aa).

Repeat 1 spans residues 12 to 15 (AAPV). The 67-residue stretch at 29–95 (HPQYQYGYDV…AVVHREPLVA (67 aa)) folds into the Chitin-binding type R&amp;R domain. The stretch at 108 to 111 (AAPV) is repeat 2.

In terms of biological role, component of the cuticle of the larva of Tenebrio molitor. In Tenebrio molitor (Yellow mealworm beetle), this protein is Larval cuticle protein A2B.